Consider the following 100-residue polypeptide: Small ribosomal subunit protein uS14c (100 aa).

The protein belongs to the universal ribosomal protein uS14 family. In terms of assembly, part of the 30S ribosomal subunit.

The protein localises to the plastid. The protein resides in the chloroplast. Its function is as follows. Binds 16S rRNA, required for the assembly of 30S particles. The chain is Small ribosomal subunit protein uS14c from Vitis vinifera (Grape).